The following is a 332-amino-acid chain: Small ribosomal subunit protein uS2 (332 aa).

It belongs to the universal ribosomal protein uS2 family.

The sequence is that of Small ribosomal subunit protein uS2 from Nitrobacter hamburgensis (strain DSM 10229 / NCIMB 13809 / X14).